Here is a 327-residue protein sequence, read N- to C-terminus: Zinc transport protein ZntB (327 aa).

Over 1–273 the chain is Cytoplasmic; sequence MEAIKGSDVN…ARRTYTMSLM (273 aa). Residues 274–294 form a helical membrane-spanning segment; the sequence is AMVFLPSTFLTGLFGVNLGGI. The Periplasmic segment spans residues 295 to 300; the sequence is PGGGWQ. The helical transmembrane segment at 301-321 threads the bilayer; the sequence is FGFSIFCILLVVLIGGVALWL. Residues 322 to 327 are Cytoplasmic-facing; it reads HRSKWL.

It belongs to the CorA metal ion transporter (MIT) (TC 1.A.35) family.

It localises to the cell inner membrane. The catalysed reaction is Zn(2+)(out) + H(+)(out) = Zn(2+)(in) + H(+)(in). Zinc transporter. Acts as a Zn(2+):proton symporter, which likely mediates zinc ion uptake. The chain is Zinc transport protein ZntB from Escherichia coli O6:K15:H31 (strain 536 / UPEC).